Reading from the N-terminus, the 313-residue chain is Homoserine O-succinyltransferase (313 aa).

Cysteine 142 serves as the catalytic Acyl-thioester intermediate. Positions 163 and 192 each coordinate substrate. The active-site Proton acceptor is histidine 235. The active site involves glutamate 237. Arginine 249 contributes to the substrate binding site.

This sequence belongs to the MetA family.

It localises to the cytoplasm. It carries out the reaction L-homoserine + succinyl-CoA = O-succinyl-L-homoserine + CoA. It functions in the pathway amino-acid biosynthesis; L-methionine biosynthesis via de novo pathway; O-succinyl-L-homoserine from L-homoserine: step 1/1. Transfers a succinyl group from succinyl-CoA to L-homoserine, forming succinyl-L-homoserine. The sequence is that of Homoserine O-succinyltransferase from Shewanella baltica (strain OS195).